The sequence spans 87 residues: Transcription factor ILI4 (87 aa).

One can recognise a bHLH domain in the interval 1-54 (MSSRRSSRSSVSEEEINELISKLQSLLPSSRRRGANQASTTKLLKETCSYIKSL).

This sequence belongs to the bHLH protein family. Interacts with LO9-177. As to expression, expressed in phloem of leaf blades and sheaths, lamina joints, filaments before anthesis, vasculare bundles of the ovule, lemma and palea, and embryos.

It is found in the cytoplasm. Functionally, atypical and probable non DNA-binding bHLH transcription factor that acts as a positive regulator of brassinosteroid (BR) response. Controls lamina inclination by participating in two BR signaling pathways involving BRI1 and RGA1. Involved in the RLI1-dependent modulation of leaf inclination by promoting lamina joint cell elongation, especially in response to phosphate (Pi) availability. This chain is Transcription factor ILI4 (ILI4), found in Oryza sativa subsp. japonica (Rice).